A 1437-amino-acid chain; its full sequence is Protein SUPPRESSOR OF npr1-1, CONSTITUTIVE 1 (1437 aa).

At methionine 1 the chain carries N-acetylmethionine. Residues 19–182 (RRYDVFPSFR…ELAEDVLRKT (164 aa)) form the TIR domain. 28-33 (RGEDVR) contacts NAD(+). The active site involves glutamate 93. LRR repeat units follow at residues 554 to 576 (MRNLQYLEIGYYGDLPQSLVYLP), 577 to 598 (LKLRLLDWDDCPLKSLPSTFKA), 600 to 621 (YLVNLIMKYSKLEKLWEGTLPL), 622 to 645 (GSLKEMNLRYSNNLKEIPDLSLAI), 647 to 668 (LEELDLVGCKSLVTLPSSIQNA), 670 to 691 (KLIYLDMSDCKKLESFPTDLNL), 692 to 715 (ESLEYLNLTGCPNLRNFPAIKMGC), 781 to 805 (LGSLEGMDLSESENLTEIPDLSKAT), 807 to 828 (LESLILNNCKSLVTLPSTIGNL), 829 to 851 (HRLVRLEMKECTGLEVLPTDVNL), 852 to 875 (SSLETLDLSGCSSLRSFPLISTNI), 877 to 895 (WLYLENTAIEEIPSTIGNL), 897 to 918 (RLVRLEMKKCTGLEVLPTDVNL), 919 to 939 (SSLETLDLSGCSSLRSFPLIS), 940 to 962 (ESIKWLYLENTAIEEIPDLSKAT), 964 to 985 (LKNLKLNNCKSLVTLPTTIGNL), 1009 to 1029 (SSLMILDLSGCSSLRTFPLIS), 1030 to 1052 (TNIVWLYLENTAIEEIPSTIGNL), 1054 to 1075 (RLVKLEMKECTGLEVLPTDVNL), 1076 to 1096 (SSLMILDLSGCSSLRTFPLIS), 1097 to 1121 (TRIECLYLQNTAIEEVPCCIEDFTR), 1123 to 1143 (TVLMMYCCQRLKTISPNIFRL), and 1161 to 1185 (LSDATVVATMEDHVSCVPLSENIEY).

The protein belongs to the disease resistance TIR-NB-LRR family. In terms of assembly, homodimer. Interacts (via TIR domain) with TPR1. Interacts with EDS1. Interacts with SRFR1. Interacts with HSP90-3. Binds to MORC1/CRT1. Interacts with TRAF1B. Met-1 is specifically acetylated by N-terminal acetyltransferase complex A (NatA). The NatA-mediated acetylation serves as a degradation signal. In terms of processing, met-1 is specifically acetylated by N-terminal acetyltransferase complex B (NatB). The NatB-mediated acetylation stabilizes SNC1. In terms of tissue distribution, expressed in guard cells and epidermal cells, but not detected in mesophyll cells.

Its subcellular location is the cytoplasm. It localises to the microsome. The protein localises to the nucleus. The enzyme catalyses NAD(+) + H2O = ADP-D-ribose + nicotinamide + H(+). Functionally, disease resistance protein of the TIR-NB-LRR-type. Part of the RPP5 locus that contains a cluster of several paralogous disease resistance (R) genes. Resistance proteins guard the plant against pathogens that contain an appropriate avirulence protein via an indirect interaction with this avirulence protein. That triggers a defense system including the hypersensitive response, which restricts the pathogen growth. Probably acts as a NAD(+) hydrolase (NADase): in response to activation, catalyzes cleavage of NAD(+) into ADP-D-ribose (ADPR) and nicotinamide; NAD(+) cleavage triggering a defense system that promotes cell death. Expression regulated by MOS1 at chromatin level. Nuclear localization of SNC1 is essential for its activity. ABA deficiency can rescue high-temperature inhibition of SNC1-mediated defense responses. This Arabidopsis thaliana (Mouse-ear cress) protein is Protein SUPPRESSOR OF npr1-1, CONSTITUTIVE 1.